We begin with the raw amino-acid sequence, 429 residues long: UDP-N-acetylglucosamine 1-carboxyvinyltransferase (429 aa).

22–23 (KN) is a phosphoenolpyruvate binding site. R96 provides a ligand contact to UDP-N-acetyl-alpha-D-glucosamine. C120 functions as the Proton donor in the catalytic mechanism. At C120 the chain carries 2-(S-cysteinyl)pyruvic acid O-phosphothioketal. UDP-N-acetyl-alpha-D-glucosamine-binding positions include 125–129 (RPVDL), D310, and I332.

It belongs to the EPSP synthase family. MurA subfamily.

The protein resides in the cytoplasm. It carries out the reaction phosphoenolpyruvate + UDP-N-acetyl-alpha-D-glucosamine = UDP-N-acetyl-3-O-(1-carboxyvinyl)-alpha-D-glucosamine + phosphate. It participates in cell wall biogenesis; peptidoglycan biosynthesis. Its function is as follows. Cell wall formation. Adds enolpyruvyl to UDP-N-acetylglucosamine. The protein is UDP-N-acetylglucosamine 1-carboxyvinyltransferase of Caulobacter vibrioides (strain ATCC 19089 / CIP 103742 / CB 15) (Caulobacter crescentus).